The sequence spans 466 residues: Ribulose bisphosphate carboxylase (466 aa).

Substrate is bound at residue Asn-111. Lys-166 serves as the catalytic Proton acceptor. Substrate is bound at residue Lys-168. Residues Lys-191, Asp-193, and Glu-194 each contribute to the Mg(2+) site. Lys-191 carries the post-translational modification N6-carboxylysine. The active-site Proton acceptor is the His-287. Residues Arg-288, His-321, and Ser-368 each coordinate substrate.

The protein belongs to the RuBisCO large chain family. Type II subfamily. As to quaternary structure, homodimer. The cofactor is Mg(2+).

The catalysed reaction is 2 (2R)-3-phosphoglycerate + 2 H(+) = D-ribulose 1,5-bisphosphate + CO2 + H2O. It catalyses the reaction D-ribulose 1,5-bisphosphate + O2 = 2-phosphoglycolate + (2R)-3-phosphoglycerate + 2 H(+). In terms of biological role, ruBisCO catalyzes two reactions: the carboxylation of D-ribulose 1,5-bisphosphate, the primary event in carbon dioxide fixation, as well as the oxidative fragmentation of the pentose substrate. Both reactions occur simultaneously and in competition at the same active site. The chain is Ribulose bisphosphate carboxylase (cbbM) from Rhodospirillum rubrum.